The primary structure comprises 227 residues: Germin-like protein subfamily 1 member 3 (227 aa).

A signal peptide spans 1–24; it reads MKYPFQCFLAKIILLALASSFVSC. C34 and C50 form a disulfide bridge. The 149-residue stretch at 64 to 212 folds into the Cupin type-1 domain; the sequence is SGLNIPGNTN…AFALDINIVR (149 aa). Mn(2+) is bound by residues H109, H111, and E116. N-linked (GlcNAc...) asparagine glycosylation is present at N136. H160 is a binding site for Mn(2+).

This sequence belongs to the germin family. In terms of assembly, oligomer (believed to be a pentamer but probably hexamer).

It localises to the secreted. Its subcellular location is the extracellular space. The protein resides in the apoplast. In terms of biological role, may play a role in plant defense. Probably has no oxalate oxidase activity even if the active site is conserved. The polypeptide is Germin-like protein subfamily 1 member 3 (Arabidopsis thaliana (Mouse-ear cress)).